The sequence spans 217 residues: MKVAPSLLSADFMHLAKEIESVSNADFLHVDVMDGHYVPNLTMGPVILENVTQMSQVPLDVHLMVENASFFVELFAPLNPQIISIHAENEKHPHRVLQLIKSSGITPGIVLNPHTHEESIKYLLESVGLVLLMSVNPGFGGQKFLDLVLEKCLKVKELIKRYNPSCLLEVDGGVNDKNIFELQQAGVDVVVSGSYIFESKDRKLAIEGLQNVRQPLA.

Ser6 provides a ligand contact to substrate. Residues His29, Asp31, and His62 each contribute to the a divalent metal cation site. Asp31 acts as the Proton acceptor in catalysis. Residues His62, 138 to 141 (GFGG), 171 to 173 (DGG), and 193 to 194 (GS) contribute to the substrate site. Asp171 contacts a divalent metal cation. The active-site Proton donor is Asp171.

It belongs to the ribulose-phosphate 3-epimerase family. A divalent metal cation serves as cofactor.

It carries out the reaction D-ribulose 5-phosphate = D-xylulose 5-phosphate. The protein operates within carbohydrate degradation. Catalyzes the reversible epimerization of D-ribulose 5-phosphate to D-xylulose 5-phosphate. This is Ribulose-phosphate 3-epimerase from Helicobacter pylori (strain J99 / ATCC 700824) (Campylobacter pylori J99).